Consider the following 273-residue polypeptide: Energy-coupling factor transporter ATP-binding protein EcfA (273 aa).

Residues 2-237 (ISIRDLTYFY…RASLLALGLA (236 aa)) form the ABC transporter domain. 36-43 (GRNGSGKS) contacts ATP.

The protein belongs to the ABC transporter superfamily. Energy-coupling factor EcfA family. In terms of assembly, forms a stable energy-coupling factor (ECF) transporter complex composed of 2 membrane-embedded substrate-binding proteins (S component), 2 ATP-binding proteins (A component) and 2 transmembrane proteins (T component).

The protein resides in the cell membrane. Its function is as follows. ATP-binding (A) component of a common energy-coupling factor (ECF) ABC-transporter complex. Unlike classic ABC transporters this ECF transporter provides the energy necessary to transport a number of different substrates. The sequence is that of Energy-coupling factor transporter ATP-binding protein EcfA from Syntrophomonas wolfei subsp. wolfei (strain DSM 2245B / Goettingen).